A 181-amino-acid polypeptide reads, in one-letter code: Diphosphoinositol polyphosphate phosphohydrolase NUDT4B (181 aa).

Substrate-binding positions include Arg-10, 18-20 (KKR), and 39-41 (SSR). The region spanning 18–145 (KKRAACLCFR…VHAEYLEKLK (128 aa)) is the Nudix hydrolase domain. Mg(2+) is bound by residues Gly-50 and Glu-66. Residues 51-72 (GGMEPEEEPGGAAVREVYEEAG) carry the Nudix box motif. Glu-69 (proton acceptor) is an active-site residue. A Mg(2+)-binding site is contributed by Glu-70. Residues 90-92 (RKH), Arg-116, and Lys-134 contribute to the substrate site.

This sequence belongs to the Nudix hydrolase family. DIPP subfamily. It depends on Mg(2+) as a cofactor. The cofactor is Mn(2+).

It is found in the cytoplasm. It catalyses the reaction diphospho-myo-inositol polyphosphate + H2O = myo-inositol polyphosphate + phosphate.. Cleaves a beta-phosphate from the diphosphate groups in PP-InsP5 (diphosphoinositol pentakisphosphate), PP-InsP4 and [PP]2-InsP4 (bisdiphosphoinositol tetrakisphosphate), suggesting that it may play a role in signal transduction. Also able to catalyze the hydrolysis of dinucleoside oligophosphate Ap6A, but not Ap5A. The major reaction products are ADP and p4a from Ap6A. Also able to hydrolyze 5-phosphoribose 1-diphosphate. Does not play a role in U8 snoRNA decapping activity. Binds U8 snoRNA. In Homo sapiens (Human), this protein is Diphosphoinositol polyphosphate phosphohydrolase NUDT4B.